The primary structure comprises 557 residues: CDP-diacylglycerol--glycerol-3-phosphate 3-phosphatidyltransferase, mitochondrial (557 aa).

Residues 1-25 (MAAAGGAALWRRLAAWLPRGPPGLA) constitute a mitochondrion transit peptide. 121-128 (ASLYLGTG) is an ATP binding site. Residues 212-238 (TIGLQHIKVYLFDDNVILSGANLSDLY) form the PLD phosphodiesterase 1 domain. Residues H217, K219, and D224 contribute to the active site. The segment at 322 to 346 (TFHSSQQGSSMLPQHDSEASEGLKP) is disordered. Residues 323-333 (FHSSQQGSSML) are compositionally biased toward polar residues. The span at 336–346 (HDSEASEGLKP) shows a compositional bias: basic and acidic residues. The region spanning 461 to 494 (AGWTFHAKGLWLYLAGSSLPCLTLIGSPNFGYRS) is the PLD phosphodiesterase 2 domain.

Belongs to the CDP-alcohol phosphatidyltransferase class-II family.

The protein localises to the mitochondrion. The catalysed reaction is a CDP-1,2-diacyl-sn-glycerol + sn-glycerol 3-phosphate = a 1,2-diacyl-sn-glycero-3-phospho-(1'-sn-glycero-3'-phosphate) + CMP + H(+). The protein operates within phospholipid metabolism; phosphatidylglycerol biosynthesis; phosphatidylglycerol from CDP-diacylglycerol: step 1/2. Activated by calcium and magnesium and inhibited by other bivalent cations. In terms of biological role, functions in the biosynthesis of the anionic phospholipids phosphatidylglycerol and cardiolipin. The chain is CDP-diacylglycerol--glycerol-3-phosphate 3-phosphatidyltransferase, mitochondrial (PGS1) from Gallus gallus (Chicken).